Consider the following 941-residue polypeptide: Protocadherin alpha-12 (941 aa).

An N-terminal signal peptide occupies residues 1-29; that stretch reads MVIIGPRGPGSQRLLLSLLLLAAWEVGSG. Cadherin domains lie at 30–133, 134–242, 243–350, 351–455, 456–565, and 581–678; these read QLHY…PPVF, RERE…GPAF, DKPS…VPEV, MVTS…APAF, AQPE…APAL, and VPRS…APKT. Residues 30 to 697 are Extracellular-facing; that stretch reads QLHYSVYEEA…DPEAALVDIN (668 aa). N-linked (GlcNAc...) asparagine glycosylation is found at Asn-257 and Asn-265. N-linked (GlcNAc...) asparagine glycosylation occurs at Asn-548. The chain crosses the membrane as a helical span at residues 698–718; the sequence is VYLIIAICAVSSLLVLTLLLY. The Cytoplasmic segment spans residues 719–941; that stretch reads TALRCSAPPT…GNSTTDNSDQ (223 aa). PXXP repeat units follow at residues 734–737, 790–793, 823–826, 863–866, and 882–885; these read PGKP, PRQP, PGGP, GPGN, and PGSP. Residues 734–885 form a 5 X 4 AA repeats of P-X-X-P region; the sequence is PGKPTLVCSS…PDKFIIPGSP (152 aa). The tract at residues 818–941 is disordered; it reads ILRAGPGGPD…GNSTTDNSDQ (124 aa). Residues 900 to 914 are compositionally biased toward basic and acidic residues; sequence DKSDFITFGKKEETK.

The protein localises to the cell membrane. Functionally, potential calcium-dependent cell-adhesion protein. May be involved in the establishment and maintenance of specific neuronal connections in the brain. This is Protocadherin alpha-12 (PCDHA12) from Homo sapiens (Human).